We begin with the raw amino-acid sequence, 227 residues long: Cytochrome c oxidase subunit 2 (227 aa).

The Mitochondrial intermembrane portion of the chain corresponds to 1 to 14 (MANHSQLGFQDASS). A helical membrane pass occupies residues 15-45 (PIMEELVEFHDHALMVALAICSLVLYLLTLM). Residues 46-58 (LTQKLSSNTVDAQ) lie on the Mitochondrial matrix side of the membrane. Residues 59 to 86 (EVELIWTILPAIVLVLLALPSLQILYMM) form a helical membrane-spanning segment. Residues 87 to 227 (DEIEEPDLTL…FETWSSLLSS (141 aa)) are Mitochondrial intermembrane-facing. 6 residues coordinate Cu cation: H160, C195, E197, C199, H203, and M206. E197 contacts Mg(2+).

It belongs to the cytochrome c oxidase subunit 2 family. As to quaternary structure, component of the cytochrome c oxidase (complex IV, CIV), a multisubunit enzyme composed of 14 subunits. The complex is composed of a catalytic core of 3 subunits MT-CO1, MT-CO2 and MT-CO3, encoded in the mitochondrial DNA, and 11 supernumerary subunits COX4I, COX5A, COX5B, COX6A, COX6B, COX6C, COX7A, COX7B, COX7C, COX8 and NDUFA4, which are encoded in the nuclear genome. The complex exists as a monomer or a dimer and forms supercomplexes (SCs) in the inner mitochondrial membrane with NADH-ubiquinone oxidoreductase (complex I, CI) and ubiquinol-cytochrome c oxidoreductase (cytochrome b-c1 complex, complex III, CIII), resulting in different assemblies (supercomplex SCI(1)III(2)IV(1) and megacomplex MCI(2)III(2)IV(2)). Found in a complex with TMEM177, COA6, COX18, COX20, SCO1 and SCO2. Interacts with TMEM177 in a COX20-dependent manner. Interacts with COX20. Interacts with COX16. Cu cation is required as a cofactor.

The protein localises to the mitochondrion inner membrane. The catalysed reaction is 4 Fe(II)-[cytochrome c] + O2 + 8 H(+)(in) = 4 Fe(III)-[cytochrome c] + 2 H2O + 4 H(+)(out). Component of the cytochrome c oxidase, the last enzyme in the mitochondrial electron transport chain which drives oxidative phosphorylation. The respiratory chain contains 3 multisubunit complexes succinate dehydrogenase (complex II, CII), ubiquinol-cytochrome c oxidoreductase (cytochrome b-c1 complex, complex III, CIII) and cytochrome c oxidase (complex IV, CIV), that cooperate to transfer electrons derived from NADH and succinate to molecular oxygen, creating an electrochemical gradient over the inner membrane that drives transmembrane transport and the ATP synthase. Cytochrome c oxidase is the component of the respiratory chain that catalyzes the reduction of oxygen to water. Electrons originating from reduced cytochrome c in the intermembrane space (IMS) are transferred via the dinuclear copper A center (CU(A)) of subunit 2 and heme A of subunit 1 to the active site in subunit 1, a binuclear center (BNC) formed by heme A3 and copper B (CU(B)). The BNC reduces molecular oxygen to 2 water molecules using 4 electrons from cytochrome c in the IMS and 4 protons from the mitochondrial matrix. In Coturnix japonica (Japanese quail), this protein is Cytochrome c oxidase subunit 2 (MT-CO2).